The chain runs to 316 residues: tRNA dimethylallyltransferase (316 aa).

23-30 is an ATP binding site; the sequence is GPTASGKS. 25–30 is a substrate binding site; it reads TASGKS. An interaction with substrate tRNA region spans residues 48 to 51; sequence DSMQ.

This sequence belongs to the IPP transferase family. Monomer. Requires Mg(2+) as cofactor.

The catalysed reaction is adenosine(37) in tRNA + dimethylallyl diphosphate = N(6)-dimethylallyladenosine(37) in tRNA + diphosphate. Functionally, catalyzes the transfer of a dimethylallyl group onto the adenine at position 37 in tRNAs that read codons beginning with uridine, leading to the formation of N6-(dimethylallyl)adenosine (i(6)A). This Rhodopseudomonas palustris (strain BisB18) protein is tRNA dimethylallyltransferase.